The primary structure comprises 235 residues: Protein C1orf43 homolog (235 aa).

A helical transmembrane segment spans residues Val-11–Val-31.

It is found in the membrane. Its subcellular location is the golgi apparatus. The protein localises to the mitochondrion. Its function is as follows. General regulator of phagocytosis. Required to uptake Gram negative bacterium by macrophages. The chain is Protein C1orf43 homolog from Rattus norvegicus (Rat).